A 316-amino-acid chain; its full sequence is Ribosomal protein L11 methyltransferase (316 aa).

Positions 157, 178, 200, and 243 each coordinate S-adenosyl-L-methionine.

Belongs to the methyltransferase superfamily. PrmA family.

Its subcellular location is the cytoplasm. The catalysed reaction is L-lysyl-[protein] + 3 S-adenosyl-L-methionine = N(6),N(6),N(6)-trimethyl-L-lysyl-[protein] + 3 S-adenosyl-L-homocysteine + 3 H(+). Functionally, methylates ribosomal protein L11. The protein is Ribosomal protein L11 methyltransferase of Streptococcus pneumoniae (strain JJA).